A 478-amino-acid polypeptide reads, in one-letter code: UBP1-associated protein 2A (478 aa).

The tract at residues 1–99 (MTKKRKLEGE…NQEDDDDEPI (99 aa)) is disordered. Positions 41 to 75 (GDVEEVEYEEVEEEQEEEVEDDDDEDDGDENEDQT) are enriched in acidic residues. 2 consecutive RRM domains span residues 140-217 (RKIF…LASK) and 245-328 (KKIY…KPGK). 2 disordered regions span residues 321–359 (IDGP…GGHG) and 442–478 (GTQP…YMGH). The span at 442 to 456 (GTQPGLQGGYQTPQP) shows a compositional bias: low complexity. Gly residues predominate over residues 457 to 470 (GQGGTSRGQHGVGP).

As to quaternary structure, interacts with UBA1A, UBA2A, UBP1A, UBP1B, UBP1C and SRK2E. Expressed in young leaves, flowers and embryos.

The protein resides in the nucleus. Its function is as follows. Heterogeneous nuclear ribonucleoprotein (hnRNP)-like protein that acts as a component of a complex regulating the turnover of mRNAs in the nucleus. Binds with high affinity to RNA molecules that contain U-rich sequences in 3'-UTRs. May function in complex with UBP1 and contribute to the stabilization of mRNAs in the nucleus. However, unlike UBP1, UBA2A does not stimulate pre-mRNA splicing. The chain is UBP1-associated protein 2A (UBA2A) from Arabidopsis thaliana (Mouse-ear cress).